We begin with the raw amino-acid sequence, 285 residues long: AT-hook motif nuclear-localized protein 21 (285 aa).

Residues 17 to 95 (DGGGGGQFTT…GSKNKPKPPV (79 aa)) form a disordered region. A compositionally biased stretch (basic residues) spans 39–50 (NHHHHHHNHNHH). Residues 63–73 (GLGGGGGGGSG) are compositionally biased toward gly residues. The segment at residues 78–90 (RRPRGRPAGSKNK) is a DNA-binding region (a.T hook). One can recognise a PPC domain in the interval 102–238 (ANTLRAHILE…EHEEHLQSGG (137 aa)).

In terms of tissue distribution, preferentially expressed in roots, but also in flowers and leaves. Detected in the inflorescence meristem, floral primordia and developing reproductive organs.

Its subcellular location is the nucleus. It localises to the nucleoplasm. Its function is as follows. Transcription factor that specifically binds AT-rich DNA sequences related to the nuclear matrix attachment regions (MARs). Binds to the MARs present in the ETTIN (ETT) promoter leading to a negative regulation of its gene expression. Functions as a molecular node downstream of the homeotic protein AGAMOUS (AG), regulating patterning and differentiation of reproductive organs. Acts as a chromatin remodeling factor that modifies the architecture of ETTIN (ETT) chromatin by modulating H3 methylation leading to the regulation of ETT expression. Seems to be involved in the regulation of a set of reproductives genes including CRABS CLAW (CRC), JAGGED (JAG) and KNUCKLES (KNU). The chain is AT-hook motif nuclear-localized protein 21 from Arabidopsis thaliana (Mouse-ear cress).